A 51-amino-acid chain; its full sequence is uncharacterized protein (51 aa).

Residues 1-42 form a disordered region; it reads MKMKTNKYMNMVRPAPPRRADPEGVRDPSTMGGGPNPFLRRS.

The protein resides in the mitochondrion. This is an uncharacterized protein from Saccharomyces cerevisiae (strain ATCC 204508 / S288c) (Baker's yeast).